The following is a 979-amino-acid chain: Ankycorbin (979 aa).

Methionine 1 bears the N-acetylmethionine mark. Serine 11 carries the post-translational modification Phosphoserine. ANK repeat units follow at residues 18–51, 52–81, 85–114, 118–147, 151–180, 184–213, and 217–247; these read KNDD…KHDS, EGKT…DVTA, SGHS…PAEN, SGKT…PINL, DGNI…DVNS, NGRT…DLSL, and LGHN…DADL. Residues 247 to 259 show a composition bias toward basic and acidic residues; the sequence is LKTPTKPKQHDQV. The segment at 247 to 299 is disordered; the sequence is LKTPTKPKQHDQVSKISSERSGTPKKRKAPPPPISPTQLSDVSSPRSITSTPL. Threonine 249 carries the post-translational modification Phosphothreonine. Positions 270–276 match the Nuclear localization signal motif; the sequence is PKKRKAP. Serine 281, serine 286, and serine 293 each carry phosphoserine. Residues 282-299 show a composition bias toward polar residues; the sequence is PTQLSDVSSPRSITSTPL. Threonine 295 and threonine 297 each carry phosphothreonine. Phosphoserine occurs at positions 300, 304, 318, 327, 329, 340, 341, and 358. A coiled-coil region spans residues 349–374; it reads LVLLQAKVASLTLHNKELQDKLQAKS. Disordered stretches follow at residues 392 to 429 and 446 to 467; these read TQTD…TDND and LESS…RTDT. The stretch at 430–943 forms a coiled coil; sequence VIIRQLQDSL…CKKHHQEVIS (514 aa). A compositionally biased stretch (basic and acidic residues) spans 446-457; the sequence is LESSEAEKKQLQ. Residues 458–467 show a composition bias toward polar residues; it reads DELQSQRTDT. Serine 513, serine 516, serine 667, serine 694, and serine 914 each carry phosphoserine.

As to quaternary structure, interacts with PALLD. Associates with actin. However, does not bind F-actin directly. In terms of tissue distribution, highly expressed in testis, where it localizes to seminiferous tubules (at protein level). Expressed in ganglion cell layer and in Muller cell fibers of the retina (at protein level). In small intestine highly expressed at the apical and lateral borders of absorptive epithelia (at protein level). In liver highly expressed along the bile canaliculi (at protein level).

The protein resides in the cytoplasm. It localises to the cytoskeleton. It is found in the stress fiber. Its subcellular location is the cell cortex. The protein localises to the cell junction. The protein resides in the nucleus. Functionally, plays a role in actin regulation at the ectoplasmic specialization, a type of cell junction specific to testis. Important for establishment of sperm polarity and normal spermatid adhesion. May also promote integrity of Sertoli cell tight junctions at the blood-testis barrier. The polypeptide is Ankycorbin (Rai14) (Mus musculus (Mouse)).